The primary structure comprises 769 residues: Serine protease HtrA-like (769 aa).

Over residues 1–20 the composition is skewed to basic residues; it reads MDIGKKHVIPKSQYRRKRRE. A disordered region spans residues 1–390; the sequence is MDIGKKHVIP…ATSKLNKGRA (390 aa). 2 stretches are compositionally biased toward basic and acidic residues: residues 21 to 64 and 71 to 108; these read FFHN…ERFK and LEQR…DVSK. The span at 126-137 shows a compositional bias: polar residues; sequence YEQNSEATLSTK. Over residues 138–186 the composition is skewed to basic and acidic residues; the sequence is STDKVESTEMRKLSSDKNKVGHEEQHVLSKPSEHDKETRIDSESSRTDS. The segment covering 247–262 has biased composition (polar residues); the sequence is QQSQNEQTKTYTYGDS. 2 stretches are compositionally biased toward basic and acidic residues: residues 264–296 and 310–330; these read QNDK…HIVD and KTDD…HKQN. Over residues 331-347 the composition is skewed to polar residues; that stretch reads ADSSETVGYQSQSTASH. The span at 348 to 364 shows a compositional bias: basic and acidic residues; the sequence is RSTEKRNISINDHDKLN. Residues 365-390 are compositionally biased toward polar residues; it reads GQKTNTKTSANNNQKKATSKLNKGRA. Residues 410–430 form a helical membrane-spanning segment; that stretch reads LVILMGIIILIVILNAIFNNV. Active-site charge relay system residues include His504, Asp534, and Ser619. The 54-residue stretch at 680-733 folds into the PDZ domain; it reads IASLNSFERQAVKLPGKVKNGVVVDQVDNNGLADQSGLKKGDVITELDGKLLED.

It belongs to the peptidase S1C family.

The protein localises to the cell membrane. This Staphylococcus aureus (strain COL) protein is Serine protease HtrA-like.